The following is a 94-amino-acid chain: C-C motif chemokine 26 (94 aa).

The N-terminal stretch at 1–23 (MKSFPVAFLVLLIFILSVHRGVT) is a signal peptide. Intrachain disulfides connect C33–C57 and C34–C73.

It belongs to the intercrine beta (chemokine CC) family. Monomer.

It localises to the secreted. Its function is as follows. Chemoattractant for eosinophils and basophils. Acts as a ligand for C-C chemokine receptor CCR3 which triggers Ca(2+) mobilization in eosinophils. Also acts as a ligand for CX3C chemokine receptor CX3CR1, inducing cell chemotaxis. In Canis lupus familiaris (Dog), this protein is C-C motif chemokine 26.